Here is a 316-residue protein sequence, read N- to C-terminus: Porphobilinogen deaminase (316 aa).

Cysteine 249 is subject to S-(dipyrrolylmethanemethyl)cysteine.

Belongs to the HMBS family. In terms of assembly, monomer. Dipyrromethane serves as cofactor.

The enzyme catalyses 4 porphobilinogen + H2O = hydroxymethylbilane + 4 NH4(+). Its pathway is porphyrin-containing compound metabolism; protoporphyrin-IX biosynthesis; coproporphyrinogen-III from 5-aminolevulinate: step 2/4. In terms of biological role, tetrapolymerization of the monopyrrole PBG into the hydroxymethylbilane pre-uroporphyrinogen in several discrete steps. This chain is Porphobilinogen deaminase, found in Nitrobacter hamburgensis (strain DSM 10229 / NCIMB 13809 / X14).